The sequence spans 682 residues: Beta-galactosidase (682 aa).

The first 23 residues, 1–23 (MPGFLVRILPLLLPLLLLGPTRG), serve as a signal peptide directing secretion. The propeptide occupies 24 to 28 (LRNAT). Residue Asn26 is glycosylated (N-linked (GlcNAc...) asparagine). Positions 83, 129, and 187 each coordinate substrate. The active-site Proton donor is Glu188. A disulfide bond links Cys195 and Cys230. Residue Asn247 is glycosylated (N-linked (GlcNAc...) asparagine). The Nucleophile role is filled by Glu268. Tyr333 is a binding site for substrate. Residues Asn464, Asn498, Asn545, and Asn555 are each glycosylated (N-linked (GlcNAc...) asparagine). Residues Cys626 and Cys634 are joined by a disulfide bond.

Belongs to the glycosyl hydrolase 35 family. Homodimer. May form higher multimers.

It is found in the lysosome. The catalysed reaction is Hydrolysis of terminal non-reducing beta-D-galactose residues in beta-D-galactosides.. Cleaves beta-linked terminal galactosyl residues from gangliosides, glycoproteins, and glycosaminoglycans. In Macaca fascicularis (Crab-eating macaque), this protein is Beta-galactosidase (GLB1).